The chain runs to 257 residues: Transmembrane protein 101 (257 aa).

Transmembrane regions (helical) follow at residues 21–40 (VLLT…LYAE), 52–72 (VPYL…MSFG), 77–97 (WFAL…YVGG), 110–130 (YSRT…AGEL), 139–159 (SLQS…AYSL), 182–202 (LFFV…YVTL), 206–226 (ILAV…AYWH), and 233–253 (FWNQ…AVIL).

The protein localises to the membrane. In terms of biological role, may activate NF-kappa-B signaling pathways. The polypeptide is Transmembrane protein 101 (TMEM101) (Bos taurus (Bovine)).